The chain runs to 458 residues: ATP synthase subunit beta (458 aa).

G148–T155 contacts ATP.

It belongs to the ATPase alpha/beta chains family. In terms of assembly, F-type ATPases have 2 components, CF(1) - the catalytic core - and CF(0) - the membrane proton channel. CF(1) has five subunits: alpha(3), beta(3), gamma(1), delta(1), epsilon(1). CF(0) has three main subunits: a(1), b(2) and c(9-12). The alpha and beta chains form an alternating ring which encloses part of the gamma chain. CF(1) is attached to CF(0) by a central stalk formed by the gamma and epsilon chains, while a peripheral stalk is formed by the delta and b chains.

It is found in the cell inner membrane. It carries out the reaction ATP + H2O + 4 H(+)(in) = ADP + phosphate + 5 H(+)(out). Its function is as follows. Produces ATP from ADP in the presence of a proton gradient across the membrane. The catalytic sites are hosted primarily by the beta subunits. The protein is ATP synthase subunit beta of Pseudomonas fluorescens (strain ATCC BAA-477 / NRRL B-23932 / Pf-5).